The chain runs to 177 residues: Adenine phosphoribosyltransferase (177 aa).

It belongs to the purine/pyrimidine phosphoribosyltransferase family. As to quaternary structure, homodimer.

It is found in the cytoplasm. The enzyme catalyses AMP + diphosphate = 5-phospho-alpha-D-ribose 1-diphosphate + adenine. The protein operates within purine metabolism; AMP biosynthesis via salvage pathway; AMP from adenine: step 1/1. Catalyzes a salvage reaction resulting in the formation of AMP, that is energically less costly than de novo synthesis. The polypeptide is Adenine phosphoribosyltransferase (Chlorobium limicola (strain DSM 245 / NBRC 103803 / 6330)).